The primary structure comprises 418 residues: CinA-like protein (418 aa).

The protein belongs to the CinA family.

The protein is CinA-like protein of Flavobacterium psychrophilum (strain ATCC 49511 / DSM 21280 / CIP 103535 / JIP02/86).